We begin with the raw amino-acid sequence, 501 residues long: Aspartyl/glutamyl-tRNA(Asn/Gln) amidotransferase subunit B (501 aa).

Belongs to the GatB/GatE family. GatB subfamily. In terms of assembly, heterotrimer of A, B and C subunits.

It carries out the reaction L-glutamyl-tRNA(Gln) + L-glutamine + ATP + H2O = L-glutaminyl-tRNA(Gln) + L-glutamate + ADP + phosphate + H(+). The catalysed reaction is L-aspartyl-tRNA(Asn) + L-glutamine + ATP + H2O = L-asparaginyl-tRNA(Asn) + L-glutamate + ADP + phosphate + 2 H(+). Functionally, allows the formation of correctly charged Asn-tRNA(Asn) or Gln-tRNA(Gln) through the transamidation of misacylated Asp-tRNA(Asn) or Glu-tRNA(Gln) in organisms which lack either or both of asparaginyl-tRNA or glutaminyl-tRNA synthetases. The reaction takes place in the presence of glutamine and ATP through an activated phospho-Asp-tRNA(Asn) or phospho-Glu-tRNA(Gln). This is Aspartyl/glutamyl-tRNA(Asn/Gln) amidotransferase subunit B from Agrobacterium fabrum (strain C58 / ATCC 33970) (Agrobacterium tumefaciens (strain C58)).